We begin with the raw amino-acid sequence, 138 residues long: DNA-directed RNA polymerase subunit omega (138 aa).

This sequence belongs to the RNA polymerase subunit omega family. The RNAP catalytic core consists of 2 alpha, 1 beta, 1 beta' and 1 omega subunit. When a sigma factor is associated with the core the holoenzyme is formed, which can initiate transcription.

The enzyme catalyses RNA(n) + a ribonucleoside 5'-triphosphate = RNA(n+1) + diphosphate. Its function is as follows. Promotes RNA polymerase assembly. Latches the N- and C-terminal regions of the beta' subunit thereby facilitating its interaction with the beta and alpha subunits. In Thermodesulfovibrio yellowstonii (strain ATCC 51303 / DSM 11347 / YP87), this protein is DNA-directed RNA polymerase subunit omega.